The chain runs to 430 residues: Adenylosuccinate synthetase (430 aa).

GTP contacts are provided by residues 13-19 (GDEGKGK) and 41-43 (GHT). Aspartate 14 acts as the Proton acceptor in catalysis. Aspartate 14 and glycine 41 together coordinate Mg(2+). Residues 14–17 (DEGK), 39–42 (NAGH), threonine 130, arginine 144, glutamine 225, threonine 240, and arginine 304 contribute to the IMP site. Histidine 42 acts as the Proton donor in catalysis. Substrate is bound at residue 300–306 (STTGRAR). Residues arginine 306, 332–334 (KLD), and 414–416 (STG) contribute to the GTP site.

Belongs to the adenylosuccinate synthetase family. In terms of assembly, homodimer. The cofactor is Mg(2+).

It is found in the cytoplasm. The enzyme catalyses IMP + L-aspartate + GTP = N(6)-(1,2-dicarboxyethyl)-AMP + GDP + phosphate + 2 H(+). Its pathway is purine metabolism; AMP biosynthesis via de novo pathway; AMP from IMP: step 1/2. Plays an important role in the de novo pathway of purine nucleotide biosynthesis. Catalyzes the first committed step in the biosynthesis of AMP from IMP. In Alcanivorax borkumensis (strain ATCC 700651 / DSM 11573 / NCIMB 13689 / SK2), this protein is Adenylosuccinate synthetase.